Here is a 236-residue protein sequence, read N- to C-terminus: Lectin alpha chain (236 aa).

Mn(2+) contacts are provided by Glu-8 and Asp-10. Ca(2+) contacts are provided by Asp-10, Tyr-12, Asn-14, and Asp-19. Position 12 (Tyr-12) interacts with a carbohydrate. Residues Asp-19, His-24, and Ser-34 each contribute to the Mn(2+) site. Residue 99–100 (LY) coordinates a carbohydrate. Asp-207 contacts Ca(2+). Residue Arg-227 coordinates a carbohydrate.

It belongs to the leguminous lectin family. In terms of assembly, equilibrium between homodimer and homotetramer. Oligomerization is pH-dependent with homotetramers forming at pH 6.5 and above. Post-translationally, the beta and gamma chains are produced by partial proteolytic processing of the lectin alpha chain by an asparaginyl endopeptidase. Mixture of 60% alpha lectin and 40% of its beta and gamma proteolytic fragments. Seed.

Functionally, D-mannose/D-glucose-binding lectin. Has anti-inflammatory activity in rats. Induces histamine release in mast cells from rat. Induces lymphocyte proliferation and IFNG production. This is Lectin alpha chain from Cratylia argentea (Cratylia floribunda).